A 355-amino-acid polypeptide reads, in one-letter code: Eukaryotic initiation factor 4A-13 (355 aa).

A Q motif motif is present at residues 40-68 (DSFDAMGLQENLLRGIYAYGFEKPSAIQQ). The Helicase ATP-binding domain maps to 71–241 (IVPFCKGLDV…RKFMNQPVRI (171 aa)). ATP is bound at residue 84-91 (AQSGTGKT). The short motif at 189-192 (DEAD) is the DEAD box element. The Helicase C-terminal domain occupies 252–355 (GIKQFYVNVD…QQVSLVINYD (104 aa)).

This sequence belongs to the DEAD box helicase family. eIF4A subfamily. In terms of assembly, eIF4F is a multi-subunit complex, the composition of which varies with external and internal environmental conditions. It is composed of at least EIF4A, EIF4E and EIF4G.

The catalysed reaction is ATP + H2O = ADP + phosphate + H(+). ATP-dependent RNA helicase which is a subunit of the eIF4F complex involved in cap recognition and is required for mRNA binding to ribosome. In the current model of translation initiation, eIF4A unwinds RNA secondary structures in the 5'-UTR of mRNAs which is necessary to allow efficient binding of the small ribosomal subunit, and subsequent scanning for the initiator codon. The sequence is that of Eukaryotic initiation factor 4A-13 from Nicotiana tabacum (Common tobacco).